The following is a 591-amino-acid chain: MDRKVLMLAVILFALAVRFQNFGEIFDSGIYYTGYDSYYHMRLVEVMVKESFRPDYDYYINYPFGLKITWPPLFDYILAFPGMLFGFHSSEIFAVFLPVILGVLSVVLICLTALQIVNNQTFALISAFIYAAAPVAVWKTVLGQADHHALVIFLFLLSAYLLLKDGVWKILAGLPMLFMALAWLGSPIYGALLAFSALVHFDRKALRLVAASYLIPAISFVLYPPVGISFFGLAAFLFVGSVVKGYEDRFRNATIYYIALSLATVLIIYFIPLPHFEFVKGGINYIFGANIYLPTISEARSLQIFEIISASGYIYFIFALISVLFFRNRFVLSMFFLSFILALMQLRFTEVLVVPSALLSAYLVSLVLERLEYPVFEKADEEEKSRRRKRKDRKVKQKNAEVEWKDHAVVAAFLVILAIPCIVVAVVPFDLTEDWKEALEWMRTSLEEQNYLNPYEKPEYSVMSWWDYGNWILYVSKKAVVCNNFQAGAVDAAKFFTAKSEDEAIKIAKKRGVRYVVTADEITMKDANNTKFPAIMRIAGYNVDLMTEGEILNFFNHTVLYRLHMENAENLTHFRLVKEFGDVKIFEVVGS.

Residues 1–5 (MDRKV) lie on the Cytoplasmic side of the membrane. A helical transmembrane segment spans residues 6–26 (LMLAVILFALAVRFQNFGEIF). Residues 27 to 67 (DSGIYYTGYDSYYHMRLVEVMVKESFRPDYDYYINYPFGLK) lie on the Extracellular side of the membrane. Positions 34 to 36 (GYD) match the DXD motif 1 motif. Residue D36 participates in Mn(2+) binding. The chain crosses the membrane as a helical span at residues 68 to 88 (ITWPPLFDYILAFPGMLFGFH). At 89–91 (SSE) the chain is on the cytoplasmic side. Residues 92–112 (IFAVFLPVILGVLSVVLICLT) form a helical membrane-spanning segment. The Extracellular portion of the chain corresponds to 113–121 (ALQIVNNQT). Residues 122–142 (FALISAFIYAAAPVAVWKTVL) form a helical membrane-spanning segment. The Cytoplasmic segment spans residues 143–147 (GQADH). Residue D146 participates in Mn(2+) binding. The short motif at 146-148 (DHH) is the DXD motif 2 element. Residue H147 coordinates a glycophospholipid. H148 serves as a coordination point for Mn(2+). The chain crosses the membrane as a helical span at residues 148-168 (HALVIFLFLLSAYLLLKDGVW). Residue K169 is a topological domain, extracellular. The helical transmembrane segment at 170-190 (ILAGLPMLFMALAWLGSPIYG) threads the bilayer. The Cytoplasmic portion of the chain corresponds to 191-219 (ALLAFSALVHFDRKALRLVAASYLIPAIS). The chain crosses the membrane as a helical span at residues 220 to 240 (FVLYPPVGISFFGLAAFLFVG). Residues 241-252 (SVVKGYEDRFRN) lie on the Extracellular side of the membrane. A helical transmembrane segment spans residues 253–273 (ATIYYIALSLATVLIIYFIPL). The Cytoplasmic segment spans residues 274-275 (PH). A helical membrane pass occupies residues 276 to 296 (FEFVKGGINYIFGANIYLPTI). The short motif at 295–298 (TISE) is the TIXE motif element. Over 297–303 (SEARSLQ) the chain is Extracellular. A helical membrane pass occupies residues 304-324 (IFEIISASGYIYFIFALISVL). The Cytoplasmic portion of the chain corresponds to 325 to 327 (FFR). The chain crosses the membrane as a helical span at residues 328 to 344 (NRFVLSMFFLSFILALM). Residues 345–347 (QLR) lie on the Extracellular side of the membrane. R347 contacts a glycophospholipid. Residues 348–368 (FTEVLVVPSALLSAYLVSLVL) form a helical membrane-spanning segment. The Cytoplasmic segment spans residues 369-408 (ERLEYPVFEKADEEEKSRRRKRKDRKVKQKNAEVEWKDHA). The chain crosses the membrane as a helical span at residues 409–429 (VVAAFLVILAIPCIVVAVVPF). The Extracellular segment spans residues 430 to 591 (DLTEDWKEAL…DVKIFEVVGS (162 aa)). The interval 465–467 (WWD) is interacts with target acceptor peptide in protein substrate. The WWDYG motif signature appears at 465–469 (WWDYG). Residues 521–535 (EITMKDANNTKFPAI) carry the DKi motif motif.

The protein belongs to the STT3 family. Mn(2+) is required as a cofactor. Mg(2+) serves as cofactor. It depends on Zn(2+) as a cofactor.

It localises to the cell membrane. It catalyses the reaction an archaeal dolichyl phosphooligosaccharide + [protein]-L-asparagine = an archaeal dolichyl phosphate + a glycoprotein with the oligosaccharide chain attached by N-beta-D-glycosyl linkage to a protein L-asparagine.. Its pathway is protein modification; protein glycosylation. Oligosaccharyl transferase (OST) that catalyzes the initial transfer of a defined glycan (a GalNAc-linked heptasaccharide composed of 4 Hex, 3 dHex and a sulfate for A.fulgidus AglB-S) from the lipid carrier dolichol-monophosphate to an asparagine residue within an Asn-X-Ser/Thr consensus motif in nascent polypeptide chains, the first step in protein N-glycosylation. The chain is Dolichyl-phosphooligosaccharide-protein glycotransferase 1 (aglB1) from Archaeoglobus fulgidus (strain ATCC 49558 / DSM 4304 / JCM 9628 / NBRC 100126 / VC-16).